Here is a 467-residue protein sequence, read N- to C-terminus: MSNSQLKIKTKALPNSRIAIEFEVPAQQCKTSFEDALTTLCKSANLPGFRKGKVPKSVILQQIGSKRIQASALEKLLEKIWKQALKEESIEPLCEPELAGGFEPLLENFNPEQTLSVTLETDVAPIPKLKTTKGLTTEAEPITFDESKVDELIEESRKQLATVIPVENRPANHSDIAILTFKGTFADDGSEIEGGSGESMEIDLEEGRMIPGFIEGIVGMKINETKTIDCQFPKDYQDEKAKGRKAKFDIQLQDLKTRELPKLDDDFAKQASDKNSLKELRNELTNRLKSDAKNRNKKNRQESLLEALVKELEVDLPKTLIDEEVRNLIEQTARNFAEQGMDIKSTFTQDLVSSLMESSRPEAEINLKKNLALNALAEAENIKVDSQALEEKIKEVNIELANQKNIDQKKLRQVVQNDLLQEKLFDWLEANNTILEKKPKKALNEKVKSSKPKNTQKKTDKTKKDSP.

Residues 174–261 enclose the PPIase FKBP-type domain; it reads SDIAILTFKG…LQDLKTRELP (88 aa). Residues 439–467 are disordered; that stretch reads PKKALNEKVKSSKPKNTQKKTDKTKKDSP. Over residues 457-467 the composition is skewed to basic and acidic residues; it reads KKTDKTKKDSP.

Belongs to the FKBP-type PPIase family. Tig subfamily.

It is found in the cytoplasm. It catalyses the reaction [protein]-peptidylproline (omega=180) = [protein]-peptidylproline (omega=0). Functionally, involved in protein export. Acts as a chaperone by maintaining the newly synthesized protein in an open conformation. Functions as a peptidyl-prolyl cis-trans isomerase. This chain is Trigger factor, found in Prochlorococcus marinus (strain SARG / CCMP1375 / SS120).